We begin with the raw amino-acid sequence, 1857 residues long: Fatty acid synthase subunit alpha (1857 aa).

A disordered region spans residues 96 to 132 (EEEPEATEPAPSATPAAPAAAPAAGAPPPPPSAGPAA). Low complexity predominate over residues 102–119 (TEPAPSATPAAPAAAPAA). The 76-residue stretch at 139 to 214 (VTAVDILRTL…ASMQATFNGQ (76 aa)) folds into the Carrier domain. O-(pantetheine 4'-phosphoryl)serine is present on Ser174. Residues 577 to 604 (QIIPQENGHSKKGGRSAAKRNTPTRPGK) form a disordered region. Residues 648–845 (KNVLMTGAGA…GAVIGWTRGT (198 aa)) are beta-ketoacyl reductase. Residues 1092-1633 (LQEIVIQEDL…QKGAQVIGIH (542 aa)) enclose the Ketosynthase family 3 (KS3) domain. Catalysis depends on for beta-ketoacyl synthase activity residues Cys1275, His1518, and His1559. Positions 1743, 1744, and 1745 each coordinate Mg(2+). Residues 1743-1745 (DVE), Tyr1769, Ser1779, 1788-1798 (EAVFKSLGVSS), 1812-1815 (VDAN), and 1842-1844 (ISH) each bind acetyl-CoA. Residues Ser1843 and His1844 each contribute to the Mg(2+) site.

Belongs to the thiolase-like superfamily. Fungal fatty acid synthetase subunit alpha family. In terms of assembly, [Alpha(6)beta(6)] hexamers of two multifunctional subunits (alpha and beta).

The enzyme catalyses acetyl-CoA + n malonyl-CoA + 2n NADPH + 4n H(+) = a long-chain-acyl-CoA + n CoA + n CO2 + 2n NADP(+).. It catalyses the reaction a fatty acyl-[ACP] + malonyl-[ACP] + H(+) = a 3-oxoacyl-[ACP] + holo-[ACP] + CO2. The catalysed reaction is a (3R)-hydroxyacyl-[ACP] + NADP(+) = a 3-oxoacyl-[ACP] + NADPH + H(+). Fatty acid synthetase catalyzes the formation of long-chain fatty acids from acetyl-CoA, malonyl-CoA and NADPH. The alpha subunit contains domains for: acyl carrier protein, 3-oxoacyl-[acyl-carrier-protein] reductase, and 3-oxoacyl-[acyl-carrier-protein] synthase. In Penicillium patulum (Penicillium griseofulvum), this protein is Fatty acid synthase subunit alpha (FAS2).